Consider the following 163-residue polypeptide: Nucleotide-binding protein LBJ_2391 (163 aa).

Belongs to the YajQ family.

Its function is as follows. Nucleotide-binding protein. The chain is Nucleotide-binding protein LBJ_2391 from Leptospira borgpetersenii serovar Hardjo-bovis (strain JB197).